Here is an 874-residue protein sequence, read N- to C-terminus: Ribosome biogenesis protein ERB1 (874 aa).

The disordered stretch occupies residues 1–148; it reads MAKKEVSASK…DAFAAADAAT (148 aa). Basic and acidic residues predominate over residues 27–41; sequence QAVEKEEAEKEKEEG. Over residues 55–77 the composition is skewed to acidic residues; that stretch reads PESDSDDEGAAAAEEEEEEEEQQ. Positions 78 to 89 are enriched in basic and acidic residues; the sequence is QDVKELDLDKGE. 2 stretches are compositionally biased toward acidic residues: residues 95–104 and 128–139; these read SDAEDFDSEE and PKEDGDEQDEQD. The required for interaction with NOP7 stretch occupies residues 312-429; the sequence is RFVPSKHEAK…LRLVPGYQDS (118 aa). The required for interaction with YTM1 stretch occupies residues 429-465; sequence SVRERFERSLDLYLAPRLRKNKLNIDPESLIPELPSP. WD repeat units lie at residues 481–520 and 529–569; these read GHTGKIRTLSIDPQGLWLATGSDDGSVRIWEVLTGRQVFK and NGED…FEIE. Over residues 593 to 602 the composition is skewed to basic and acidic residues; it reads KVKGEDTKGD. The disordered stretch occupies residues 593–640; the sequence is KVKGEDTKGDLDDDEEEEEEEEDDDDDEGQGKVKAHNSTAPAKKDVAK. Over residues 603 to 620 the composition is skewed to acidic residues; that stretch reads LDDDEEEEEEEEDDDDDE. WD repeat units follow at residues 658–700, 703–741, 744–783, 787–827, and 843–874; these read QCRR…SQSP, KSKGVIMDAKFHPFKPQLFVASQRQIKIYDLAQQTLLKK, PGVRLLSTIDLHPRGDNLLAASYDKRVLWHDLDLAATPYK, YHEK…DLMT, and INQIGVLDIVWHPKEAWLFSAGADGTARLWTT.

It belongs to the WD repeat BOP1/ERB1 family. In terms of assembly, component of the NOP7 complex, composed of ERB1, NOP7 and YTM1. The complex is held together by ERB1, which interacts with NOP7 via its N-terminal domain and with YTM1 via a high-affinity interaction between the seven-bladed beta-propeller domains of the 2 proteins. The NOP7 complex associates with the 66S pre-ribosome.

The protein resides in the nucleus. It localises to the nucleolus. Its subcellular location is the nucleoplasm. Its function is as follows. Component of the NOP7 complex, which is required for maturation of the 25S and 5.8S ribosomal RNAs and formation of the 60S ribosome. This is Ribosome biogenesis protein ERB1 from Lodderomyces elongisporus (strain ATCC 11503 / CBS 2605 / JCM 1781 / NBRC 1676 / NRRL YB-4239) (Yeast).